Here is a 345-residue protein sequence, read N- to C-terminus: Protein RecA (345 aa).

66–73 is an ATP binding site; the sequence is GPESSGKT.

It belongs to the RecA family.

The protein resides in the cytoplasm. Functionally, can catalyze the hydrolysis of ATP in the presence of single-stranded DNA, the ATP-dependent uptake of single-stranded DNA by duplex DNA, and the ATP-dependent hybridization of homologous single-stranded DNAs. It interacts with LexA causing its activation and leading to its autocatalytic cleavage. The polypeptide is Protein RecA (Helicobacter hepaticus (strain ATCC 51449 / 3B1)).